Consider the following 247-residue polypeptide: Putative ankyrin repeat protein RBE_1110 (247 aa).

ANK repeat units lie at residues Gln-105–Tyr-135 and Glu-139–Thr-171.

This chain is Putative ankyrin repeat protein RBE_1110, found in Rickettsia bellii (strain RML369-C).